The chain runs to 167 residues: Putative lipoprotein YteS (167 aa).

Positions 1–20 (MTKRIRTALCVIVSVLFLAS) are cleaved as a signal peptide. A lipid anchor (N-palmitoyl cysteine) is attached at cysteine 21. Cysteine 21 carries the S-diacylglycerol cysteine lipid modification.

It is found in the cell membrane. Functionally, may play a role in the degradation of type I rhamnogalacturonan derived from plant cell walls. The sequence is that of Putative lipoprotein YteS (yteS) from Bacillus subtilis (strain 168).